Reading from the N-terminus, the 750-residue chain is Photosystem I P700 chlorophyll a apoprotein A1 (750 aa).

The next 8 helical transmembrane spans lie at Val-70–Ala-93, Leu-156–His-179, Leu-195–Leu-219, Ile-291–Tyr-309, Trp-346–Tyr-369, Leu-385–Val-411, Ala-433–His-455, and Phe-531–Leu-549. Residues Cys-573 and Cys-582 each contribute to the [4Fe-4S] cluster site. 2 helical membrane-spanning segments follow: residues His-589 to Trp-610 and Leu-664 to Phe-686. A chlorophyll a'-binding site is contributed by His-675. Chlorophyll a is bound by residues Met-683 and Tyr-691. Trp-692 lines the phylloquinone pocket. Residues Ala-724–Ala-744 form a helical membrane-spanning segment.

It belongs to the PsaA/PsaB family. As to quaternary structure, the PsaA/B heterodimer binds the P700 chlorophyll special pair and subsequent electron acceptors. PSI consists of a core antenna complex that captures photons, and an electron transfer chain that converts photonic excitation into a charge separation. The eukaryotic PSI reaction center is composed of at least 11 subunits. It depends on P700 is a chlorophyll a/chlorophyll a' dimer, A0 is one or more chlorophyll a, A1 is one or both phylloquinones and FX is a shared 4Fe-4S iron-sulfur center. as a cofactor.

The protein resides in the plastid. It localises to the chloroplast thylakoid membrane. It catalyses the reaction reduced [plastocyanin] + hnu + oxidized [2Fe-2S]-[ferredoxin] = oxidized [plastocyanin] + reduced [2Fe-2S]-[ferredoxin]. PsaA and PsaB bind P700, the primary electron donor of photosystem I (PSI), as well as the electron acceptors A0, A1 and FX. PSI is a plastocyanin-ferredoxin oxidoreductase, converting photonic excitation into a charge separation, which transfers an electron from the donor P700 chlorophyll pair to the spectroscopically characterized acceptors A0, A1, FX, FA and FB in turn. Oxidized P700 is reduced on the lumenal side of the thylakoid membrane by plastocyanin. The protein is Photosystem I P700 chlorophyll a apoprotein A1 of Triticum aestivum (Wheat).